Consider the following 320-residue polypeptide: Cytochrome f (320 aa).

The signal sequence occupies residues 1-35 (MQNRNTFSWIKEQMTRSISVSIMIYVITRTAISNA). Heme is bound by residues Tyr36, Cys56, Cys59, and His60. Residues 286–306 (VQGLLFFLASVILAQIFLVLK) traverse the membrane as a helical segment.

Belongs to the cytochrome f family. The 4 large subunits of the cytochrome b6-f complex are cytochrome b6, subunit IV (17 kDa polypeptide, petD), cytochrome f and the Rieske protein, while the 4 small subunits are PetG, PetL, PetM and PetN. The complex functions as a dimer. The cofactor is heme.

It is found in the plastid. It localises to the chloroplast thylakoid membrane. Its function is as follows. Component of the cytochrome b6-f complex, which mediates electron transfer between photosystem II (PSII) and photosystem I (PSI), cyclic electron flow around PSI, and state transitions. This chain is Cytochrome f, found in Platanus occidentalis (Sycamore).